Consider the following 148-residue polypeptide: uncharacterized protein (148 aa).

One can recognise an HTH asnC-type domain in the interval 2–63 (LDELDKRILY…LINPFKAGYE (62 aa)). Residues 21–40 (YSEIARILGVPESTVRVRVK) constitute a DNA-binding region (H-T-H motif).

This is an uncharacterized protein from Pyrococcus furiosus (strain ATCC 43587 / DSM 3638 / JCM 8422 / Vc1).